The primary structure comprises 412 residues: Mannose-6-phosphate isomerase (412 aa).

Zn(2+) is bound by residues Gln99, His101, Glu126, and His265. Residue Arg284 is part of the active site.

This sequence belongs to the mannose-6-phosphate isomerase type 1 family. Requires Zn(2+) as cofactor.

The protein resides in the cytoplasm. It is found in the nucleus. The catalysed reaction is D-mannose 6-phosphate = D-fructose 6-phosphate. Its pathway is nucleotide-sugar biosynthesis; GDP-alpha-D-mannose biosynthesis; alpha-D-mannose 1-phosphate from D-fructose 6-phosphate: step 1/2. Functionally, involved in the synthesis of the GDP-mannose and dolichol-phosphate-mannose required for a number of critical mannosyl transfer reactions. The protein is Mannose-6-phosphate isomerase (pmi40) of Schizosaccharomyces pombe (strain 972 / ATCC 24843) (Fission yeast).